Here is a 208-residue protein sequence, read N- to C-terminus: Methyl-CpG-binding domain protein 3-like 5 (208 aa).

The protein belongs to the MBD3L family.

The protein is Methyl-CpG-binding domain protein 3-like 5 (MBD3L5) of Homo sapiens (Human).